A 163-amino-acid polypeptide reads, in one-letter code: Large ribosomal subunit protein uL15 (163 aa).

The tract at residues 1–43 (MKLNEIADNEGSRKKRTRVGRGIGSGKGKQSGRGGKGQTARSG) is disordered. Positions 21-37 (RGIGSGKGKQSGRGGKG) are enriched in gly residues.

This sequence belongs to the universal ribosomal protein uL15 family. Part of the 50S ribosomal subunit.

In terms of biological role, binds to the 23S rRNA. The chain is Large ribosomal subunit protein uL15 from Afipia carboxidovorans (strain ATCC 49405 / DSM 1227 / KCTC 32145 / OM5) (Oligotropha carboxidovorans).